The sequence spans 106 residues: uncharacterized protein (106 aa).

The next 4 helical transmembrane spans lie at 3-23 (WFLLVIAGIEEIIAAIAMKYI), 29-49 (KWPIIVMTVGFGLSFYCLSQA), 50-70 (MIVLPAGVAYAVWTGIGSIGV), and 82-102 (FQLSQVISLCLILAGVIGLRL).

Belongs to the drug/metabolite transporter (DMT) superfamily. Small multidrug resistance (SMR) (TC 2.A.7.1) family.

It is found in the cell membrane. This is an uncharacterized protein from Bacillus subtilis (strain 168).